Reading from the N-terminus, the 205-residue chain is N-(5'-phosphoribosyl)anthranilate isomerase (205 aa).

This sequence belongs to the TrpF family.

The enzyme catalyses N-(5-phospho-beta-D-ribosyl)anthranilate = 1-(2-carboxyphenylamino)-1-deoxy-D-ribulose 5-phosphate. The protein operates within amino-acid biosynthesis; L-tryptophan biosynthesis; L-tryptophan from chorismate: step 3/5. This chain is N-(5'-phosphoribosyl)anthranilate isomerase, found in Acidiphilium cryptum (strain JF-5).